Consider the following 363-residue polypeptide: UDP-N-acetylglucosamine--N-acetylmuramyl-(pentapeptide) pyrophosphoryl-undecaprenol N-acetylglucosamine transferase (363 aa).

UDP-N-acetyl-alpha-D-glucosamine contacts are provided by residues 16–18 (TGG), Asn-128, Arg-167, Ser-195, Ile-249, 268–273 (ALTVSE), and Gln-294.

Belongs to the glycosyltransferase 28 family. MurG subfamily.

Its subcellular location is the cell inner membrane. The enzyme catalyses di-trans,octa-cis-undecaprenyl diphospho-N-acetyl-alpha-D-muramoyl-L-alanyl-D-glutamyl-meso-2,6-diaminopimeloyl-D-alanyl-D-alanine + UDP-N-acetyl-alpha-D-glucosamine = di-trans,octa-cis-undecaprenyl diphospho-[N-acetyl-alpha-D-glucosaminyl-(1-&gt;4)]-N-acetyl-alpha-D-muramoyl-L-alanyl-D-glutamyl-meso-2,6-diaminopimeloyl-D-alanyl-D-alanine + UDP + H(+). Its pathway is cell wall biogenesis; peptidoglycan biosynthesis. In terms of biological role, cell wall formation. Catalyzes the transfer of a GlcNAc subunit on undecaprenyl-pyrophosphoryl-MurNAc-pentapeptide (lipid intermediate I) to form undecaprenyl-pyrophosphoryl-MurNAc-(pentapeptide)GlcNAc (lipid intermediate II). This chain is UDP-N-acetylglucosamine--N-acetylmuramyl-(pentapeptide) pyrophosphoryl-undecaprenol N-acetylglucosamine transferase, found in Marinobacter nauticus (strain ATCC 700491 / DSM 11845 / VT8) (Marinobacter aquaeolei).